Consider the following 468-residue polypeptide: 3-isopropylmalate dehydratase large subunit (468 aa).

The tract at residues 53–74 (QPSKTVATMDHNVPTDSRDLAG) is disordered. [4Fe-4S] cluster contacts are provided by C347, C407, and C410.

The protein belongs to the aconitase/IPM isomerase family. LeuC type 1 subfamily. As to quaternary structure, heterodimer of LeuC and LeuD. [4Fe-4S] cluster is required as a cofactor.

The enzyme catalyses (2R,3S)-3-isopropylmalate = (2S)-2-isopropylmalate. Its pathway is amino-acid biosynthesis; L-leucine biosynthesis; L-leucine from 3-methyl-2-oxobutanoate: step 2/4. Functionally, catalyzes the isomerization between 2-isopropylmalate and 3-isopropylmalate, via the formation of 2-isopropylmaleate. This is 3-isopropylmalate dehydratase large subunit from Pasteurella multocida (strain Pm70).